Consider the following 287-residue polypeptide: Serine/arginine-rich SC35-like splicing factor SCL33 (287 aa).

The segment at 1 to 34 (MRGRSYTPSPPRGYGRRGRSPSPRGRYGGRSRDL) is disordered. Phosphoserine is present on residues Ser-9 and Ser-20. The 79-residue stretch at 36-114 (TSLLVRNLRH…RELTVVFAEE (79 aa)) folds into the RRM domain. A compositionally biased stretch (basic and acidic residues) spans 116 to 132 (RKKPTEMRARERGGGRF). Positions 116–287 (RKKPTEMRAR…QYDEDRSPSQ (172 aa)) are disordered. A phosphoserine mark is found at Ser-165, Ser-175, Ser-177, Ser-188, and Ser-190. Over residues 177–187 (SPREERYDGRR) the composition is skewed to basic and acidic residues. Residues 220–237 (SISRSPRRSRSPSPKRNR) show a composition bias toward basic residues. Ser-238, Ser-248, Ser-271, Ser-284, and Ser-286 each carry phosphoserine. Residues 244–260 (SISRSPRRSRSPRRSRR) show a composition bias toward basic residues. A compositionally biased stretch (basic and acidic residues) spans 278-287 (QYDEDRSPSQ).

Belongs to the splicing factor SR family. SCL subfamily. Component of the spliceosome. Homodimer. Interacts with AFC2, CYP59, RS2Z33, RNU1 and SR45. The interaction with AFC2 depends on phosphorylation status. Post-translationally, phosphorylated by AFC2. Ubiquitous. Mostly expressed in roots, fruits and flowers, and, to a lower extent, in leaves.

The protein localises to the nucleus speckle. Its subcellular location is the nucleus. It is found in the nucleoplasm. The protein resides in the cytoplasm. In terms of biological role, involved in intron recognition and spliceosome assembly. Binds to multiple 5'-GAAG-3' repeats found in its third intron, suggesting autoregulation of alternative splicing. May be necessary for accurate splicing of the 3' region of introns. The protein is Serine/arginine-rich SC35-like splicing factor SCL33 (SCL33) of Arabidopsis thaliana (Mouse-ear cress).